A 250-amino-acid polypeptide reads, in one-letter code: Dihydroorotate dehydrogenase B (NAD(+)), electron transfer subunit (250 aa).

In terms of domain architecture, FAD-binding FR-type spans 1–94; it reads MKVVAQEEIA…MGPQGNGFDL (94 aa). Residues 45–48, 62–64, and 69–70 contribute to the FAD site; these read RPIS, IYR, and GT. Residues cysteine 214, cysteine 219, cysteine 222, and cysteine 237 each contribute to the [2Fe-2S] cluster site.

This sequence belongs to the PyrK family. As to quaternary structure, heterotetramer of 2 PyrK and 2 PyrD type B subunits. [2Fe-2S] cluster is required as a cofactor. The cofactor is FAD.

Its pathway is pyrimidine metabolism; UMP biosynthesis via de novo pathway; orotate from (S)-dihydroorotate (NAD(+) route): step 1/1. Functionally, responsible for channeling the electrons from the oxidation of dihydroorotate from the FMN redox center in the PyrD type B subunit to the ultimate electron acceptor NAD(+). The polypeptide is Dihydroorotate dehydrogenase B (NAD(+)), electron transfer subunit (Streptococcus pneumoniae serotype 4 (strain ATCC BAA-334 / TIGR4)).